The following is a 477-amino-acid chain: Ribulose bisphosphate carboxylase large chain (477 aa).

Positions 1–2 (MS) are excised as a propeptide. At Pro-3 the chain carries N-acetylproline. N6,N6,N6-trimethyllysine is present on Lys-14. Substrate contacts are provided by Asn-123 and Thr-173. The Proton acceptor role is filled by Lys-175. Lys-177 is a binding site for substrate. Mg(2+)-binding residues include Lys-201, Asp-203, and Glu-204. Position 201 is an N6-carboxylysine (Lys-201). The Proton acceptor role is filled by His-294. Positions 295, 327, and 379 each coordinate substrate.

The protein belongs to the RuBisCO large chain family. Type I subfamily. Heterohexadecamer of 8 large chains and 8 small chains; disulfide-linked. The disulfide link is formed within the large subunit homodimers. Requires Mg(2+) as cofactor. In terms of processing, the disulfide bond which can form in the large chain dimeric partners within the hexadecamer appears to be associated with oxidative stress and protein turnover.

The protein resides in the plastid. The protein localises to the chloroplast. It catalyses the reaction 2 (2R)-3-phosphoglycerate + 2 H(+) = D-ribulose 1,5-bisphosphate + CO2 + H2O. It carries out the reaction D-ribulose 1,5-bisphosphate + O2 = 2-phosphoglycolate + (2R)-3-phosphoglycerate + 2 H(+). In terms of biological role, ruBisCO catalyzes two reactions: the carboxylation of D-ribulose 1,5-bisphosphate, the primary event in carbon dioxide fixation, as well as the oxidative fragmentation of the pentose substrate in the photorespiration process. Both reactions occur simultaneously and in competition at the same active site. This Persea americana (Avocado) protein is Ribulose bisphosphate carboxylase large chain.